Consider the following 1252-residue polypeptide: DNA-directed RNA polymerase subunit beta (1252 aa).

It belongs to the RNA polymerase beta chain family. The RNAP catalytic core consists of 2 alpha, 1 beta, 1 beta' and 1 omega subunit. When a sigma factor is associated with the core the holoenzyme is formed, which can initiate transcription.

It carries out the reaction RNA(n) + a ribonucleoside 5'-triphosphate = RNA(n+1) + diphosphate. DNA-dependent RNA polymerase catalyzes the transcription of DNA into RNA using the four ribonucleoside triphosphates as substrates. In Chlamydia trachomatis serovar L2 (strain ATCC VR-902B / DSM 19102 / 434/Bu), this protein is DNA-directed RNA polymerase subunit beta.